The primary structure comprises 450 residues: Tubulin alpha-1 chain (450 aa).

Positions 11, 71, 144, 145, 179, 206, and 228 each coordinate GTP. A Mg(2+)-binding site is contributed by E71. E254 is an active-site residue. T349 carries the phosphothreonine modification. Residues 431–450 (DYEEVGGEGAEDDDEEGDEY) are disordered.

The protein belongs to the tubulin family. As to quaternary structure, dimer of alpha and beta chains. A typical microtubule is a hollow water-filled tube with an outer diameter of 25 nm and an inner diameter of 15 nM. Alpha-beta heterodimers associate head-to-tail to form protofilaments running lengthwise along the microtubule wall with the beta-tubulin subunit facing the microtubule plus end conferring a structural polarity. Microtubules usually have 13 protofilaments but different protofilament numbers can be found in some organisms and specialized cells. It depends on Mg(2+) as a cofactor. In terms of processing, undergoes a tyrosination/detyrosination cycle, the cyclic removal and re-addition of a C-terminal tyrosine residue by the enzymes tubulin tyrosine carboxypeptidase (TTCP) and tubulin tyrosine ligase (TTL), respectively.

Its subcellular location is the cytoplasm. The protein resides in the cytoskeleton. It carries out the reaction GTP + H2O = GDP + phosphate + H(+). Tubulin is the major constituent of microtubules, a cylinder consisting of laterally associated linear protofilaments composed of alpha- and beta-tubulin heterodimers. Microtubules grow by the addition of GTP-tubulin dimers to the microtubule end, where a stabilizing cap forms. Below the cap, tubulin dimers are in GDP-bound state, owing to GTPase activity of alpha-tubulin. The chain is Tubulin alpha-1 chain (TUBA1) from Arabidopsis thaliana (Mouse-ear cress).